The sequence spans 488 residues: Zinc finger protein 92 (488 aa).

Positions 14–85 constitute a KRAB domain; it reads VSFEDVSVYF…DDGMESAARS (72 aa). 6 consecutive C2H2-type zinc fingers follow at residues 141–163, 169–191, 197–219, 225–247, 253–275, and 281–303; these read YLCQ…RIIH, YECS…QRIH, YECG…QVIH, FVCR…TRIH, FECT…QRIH, and YICK…QLIH. A C2H2-type 7; degenerate zinc finger spans residues 309-331; it reads FTCHEYGKAFRGLSGLSQHQRVH. The C2H2-type 8 zinc finger occupies 337–359; that stretch reads YECSECGRAFGRRANLFKHQVVH. The segment at 387–408 is disordered; the sequence is QQPQEAGEGSSAEPQPIDTNEK. Residues 410 to 432 form a C2H2-type 9 zinc finger; sequence QVCERCGQVFENKLLLCRHLRIH. Residues 435 to 488 are disordered; it reads EDDKKQKPVISSTSVLEDKSLLSQHLEAQPTEESDSEGSVVFVYAEKPHGPSSP.

The protein belongs to the krueppel C2H2-type zinc-finger protein family. In terms of tissue distribution, highly expressed in pancreatic islets.

It localises to the nucleus. KRAB domain-containing zinc-finger protein that represses B1/Alu SINE transposable elements and modulates the transcription of nearby genes in a tissue-specific manner. It regulates glucose homeostasis and lipid metabolism by modulating the expression of the endocrine cell-defining transcription factor, MAFB, in pancreatic islets and, the fat metabolism regulator, ACACB, in adipose tissue and muscle. The polypeptide is Zinc finger protein 92 (Zfp92) (Mus musculus (Mouse)).